The chain runs to 282 residues: NADPH-dependent 7-cyano-7-deazaguanine reductase (282 aa).

88-90 (IES) is a binding site for substrate. 90 to 91 (SK) is an NADPH binding site. C190 (thioimide intermediate) is an active-site residue. The active-site Proton donor is D197. Substrate is bound at residue 229–230 (HE). An NADPH-binding site is contributed by 258 to 259 (RG).

Belongs to the GTP cyclohydrolase I family. QueF type 2 subfamily. In terms of assembly, homodimer.

The protein resides in the cytoplasm. The enzyme catalyses 7-aminomethyl-7-carbaguanine + 2 NADP(+) = 7-cyano-7-deazaguanine + 2 NADPH + 3 H(+). It functions in the pathway tRNA modification; tRNA-queuosine biosynthesis. Catalyzes the NADPH-dependent reduction of 7-cyano-7-deazaguanine (preQ0) to 7-aminomethyl-7-deazaguanine (preQ1). The chain is NADPH-dependent 7-cyano-7-deazaguanine reductase from Escherichia coli (strain UTI89 / UPEC).